Reading from the N-terminus, the 318-residue chain is Protein-L-histidine N-pros-methyltransferase (318 aa).

Positions 1–18 (MRLLAGWLCLSLASVWLA) are cleaved as a signal peptide. N35 carries N-linked (GlcNAc...) asparagine glycosylation. 3 residues coordinate S-adenosyl-L-homocysteine: E174, N210, and Y295.

This sequence belongs to the METTL9 family.

It localises to the endoplasmic reticulum. The protein resides in the mitochondrion. The enzyme catalyses L-histidyl-[protein] + S-adenosyl-L-methionine = N(pros)-methyl-L-histidyl-[protein] + S-adenosyl-L-homocysteine + H(+). Functionally, protein-histidine N-methyltransferase that specifically catalyzes 1-methylhistidine (pros-methylhistidine) methylation of target proteins. Specifically methylates the second His of proteins with a His-x-His (HxH) motif (where 'x' is preferably a small amino acid), while exploiting the first one as a recognition signature. Catalyzes methylation of target proteins such as S100A9, NDUFB3, SLC39A5, SLC39A7, ARMC6 and DNAJB12; 1-methylhistidine modification may affect the binding of zinc and other metals to its target proteins. Constitutes the main methyltransferase for the 1-methylhistidine modification in cell. The sequence is that of Protein-L-histidine N-pros-methyltransferase from Homo sapiens (Human).